The chain runs to 77 residues: Cysteine-rich protein 1 (77 aa).

One can recognise an LIM zinc-binding domain in the interval 2–63; it reads PKCPKCDKEV…HPCYSAMFGP (62 aa). 2 positions are modified to N6-acetyllysine: lysine 9 and lysine 22. Omega-N-methylarginine is present on arginine 68.

Its function is as follows. Seems to have a role in zinc absorption and may function as an intracellular zinc transport protein. The sequence is that of Cysteine-rich protein 1 (Crip1) from Mus musculus (Mouse).